The sequence spans 1380 residues: DNA-directed RNA polymerase subunit beta (1380 aa).

The protein belongs to the RNA polymerase beta chain family. As to quaternary structure, the RNAP catalytic core consists of 2 alpha, 1 beta, 1 beta' and 1 omega subunit. When a sigma factor is associated with the core the holoenzyme is formed, which can initiate transcription.

It carries out the reaction RNA(n) + a ribonucleoside 5'-triphosphate = RNA(n+1) + diphosphate. DNA-dependent RNA polymerase catalyzes the transcription of DNA into RNA using the four ribonucleoside triphosphates as substrates. This is DNA-directed RNA polymerase subunit beta from Sinorhizobium medicae (strain WSM419) (Ensifer medicae).